Here is a 446-residue protein sequence, read N- to C-terminus: Coagulation factor VII (446 aa).

An N-terminal signal peptide occupies residues 1–24 (MVPQAHGLLLLCFLLQLQGPLGTA). A propeptide spanning residues 25 to 41 (VFITQEEAHGVLHRQRR) is cleaved from the precursor. One can recognise a Gla domain in the interval 42–86 (ANSLLEELWPGSLERECNEEQCSFEEAREIFKSPERTKQFWIVYS). 10 positions are modified to 4-carboxyglutamate: E47, E48, E55, E57, E60, E61, E66, E67, E70, and E76. C58 and C63 are disulfide-bonded. The EGF-like 1; calcium-binding domain maps to 87-123 (DGDQCASNPCQNGGTCQDHLKSYVCFCLLDFEGRNCE). 10 cysteine pairs are disulfide-bonded: C91–C102, C96–C111, C113–C122, C132–C143, C139–C153, C155–C168, C176–C303, C200–C205, C219–C235, and C351–C370. An O-linked (Glc...) serine; alternate glycan is attached at S93. An O-linked (Xyl...) serine; alternate glycan is attached at S93. (3R)-3-hydroxyaspartate is present on D104. Positions 128-169 (EQLICANENGDCDQYCRDHVGTKRTCSCHEDYTLQPDEVSCK) constitute an EGF-like 2 domain. N186 carries an N-linked (GlcNAc...) asparagine glycan. Residues 194–433 (IVGGNVCPKG…YIDWLVRHMD (240 aa)) enclose the Peptidase S1 domain. H234 acts as the Charge relay system in catalysis. A glycan (N-linked (GlcNAc...) asparagine) is linked at N244. The active-site Charge relay system is D283. D379 contributes to the substrate binding site. An intrachain disulfide couples C381 to C409. The active-site Charge relay system is S385.

This sequence belongs to the peptidase S1 family. Heterodimer of a light chain and a heavy chain linked by a disulfide bond. In terms of processing, the vitamin K-dependent, enzymatic carboxylation of some glutamate residues allows the modified protein to bind calcium. Post-translationally, the iron and 2-oxoglutarate dependent 3-hydroxylation of aspartate and asparagine is (R) stereospecific within EGF domains. Can be either O-glucosylated or O-xylosylated at Ser-93 by POGLUT1. As to expression, plasma and liver.

The protein localises to the secreted. It catalyses the reaction Selective cleavage of Arg-|-Ile bond in factor X to form factor Xa.. Functionally, initiates the extrinsic pathway of blood coagulation. Serine protease that circulates in the blood in a zymogen form. Factor VII is converted to factor VIIa by factor Xa, factor XIIa, factor IXa, or thrombin by minor proteolysis. In the presence of tissue factor and calcium ions, factor VIIa then converts factor X to factor Xa by limited proteolysis. Factor VIIa also converts factor IX to factor IXa in the presence of tissue factor and calcium. In Mus musculus (Mouse), this protein is Coagulation factor VII (F7).